The sequence spans 216 residues: Transmembrane emp24 domain-containing protein eca (216 aa).

The signal sequence occupies residues Met1–Gly20. Residues Leu21–Ser182 lie on the Lumenal side of the membrane. In terms of domain architecture, GOLD spans Arg30–Val126. The stretch at Ala134–Asn164 forms a coiled coil. Residues Arg183–Met203 traverse the membrane as a helical segment. Residues Arg204–Val216 are Cytoplasmic-facing. The Prevents secretion from ER signature appears at Lys213–Val216.

It belongs to the EMP24/GP25L family.

It localises to the endoplasmic reticulum membrane. In terms of biological role, eca and bai are essential, though not redundant, for dorsoventral patterning of the embryo. Specifically required during early embryogenesis for the activity of maternal tkv, while the zygotic tkv is not affected. Involved in Golgi organization. The protein is Transmembrane emp24 domain-containing protein eca of Drosophila erecta (Fruit fly).